Here is a 317-residue protein sequence, read N- to C-terminus: Thymidylate synthase (317 aa).

DUMP is bound by residues Arg-24 and 179–180 (RR). Catalysis depends on Cys-199, which acts as the Nucleophile. DUMP is bound by residues 219–222 (RSAD), Asn-230, and 260–262 (HIY). Asp-222 contacts (6R)-5,10-methylene-5,6,7,8-tetrahydrofolate. Residue Ala-316 participates in (6R)-5,10-methylene-5,6,7,8-tetrahydrofolate binding.

Belongs to the thymidylate synthase family. Bacterial-type ThyA subfamily. Homodimer.

Its subcellular location is the cytoplasm. It catalyses the reaction dUMP + (6R)-5,10-methylene-5,6,7,8-tetrahydrofolate = 7,8-dihydrofolate + dTMP. It participates in pyrimidine metabolism; dTTP biosynthesis. Functionally, catalyzes the reductive methylation of 2'-deoxyuridine-5'-monophosphate (dUMP) to 2'-deoxythymidine-5'-monophosphate (dTMP) while utilizing 5,10-methylenetetrahydrofolate (mTHF) as the methyl donor and reductant in the reaction, yielding dihydrofolate (DHF) as a by-product. This enzymatic reaction provides an intracellular de novo source of dTMP, an essential precursor for DNA biosynthesis. The chain is Thymidylate synthase from Oceanobacillus iheyensis (strain DSM 14371 / CIP 107618 / JCM 11309 / KCTC 3954 / HTE831).